Consider the following 271-residue polypeptide: Ribosomal RNA small subunit methyltransferase A (271 aa).

Residues His11, Leu13, Gly38, Glu58, Asp86, and Asn101 each contribute to the S-adenosyl-L-methionine site.

It belongs to the class I-like SAM-binding methyltransferase superfamily. rRNA adenine N(6)-methyltransferase family. RsmA subfamily.

The protein resides in the cytoplasm. The enzyme catalyses adenosine(1518)/adenosine(1519) in 16S rRNA + 4 S-adenosyl-L-methionine = N(6)-dimethyladenosine(1518)/N(6)-dimethyladenosine(1519) in 16S rRNA + 4 S-adenosyl-L-homocysteine + 4 H(+). In terms of biological role, specifically dimethylates two adjacent adenosines (A1518 and A1519) in the loop of a conserved hairpin near the 3'-end of 16S rRNA in the 30S particle. May play a critical role in biogenesis of 30S subunits. The protein is Ribosomal RNA small subunit methyltransferase A of Helicobacter pylori (strain Shi470).